The following is a 524-amino-acid chain: M-phase inducer phosphatase 1 (524 aa).

Residues 74–84 (MGSSESTDSGF) carry the Phosphodegron motif. Serine 76 bears the Phosphoserine; by CHEK1 mark. Phosphoserine; by NEK11 occurs at positions 79, 82, and 88. Residue serine 107 is modified to Phosphoserine. Serine 124 carries the phosphoserine; by CHEK1 and CHEK2 modification. The KEN box motif lies at 141–143 (KEN). Phosphoserine; by CHEK1 is present on serine 178. A disordered region spans residues 264–317 (LCSSSTRSVLKRPERSQEESPPGSTKRRKSMSGASPKESTNPEKAHETLHQSLS). Residues serine 279 and serine 293 each carry the phosphoserine; by CHEK1 and CHEK2 modification. The span at 303–312 (TNPEKAHETL) shows a compositional bias: basic and acidic residues. Serine 321 is modified (phosphoserine). The Rhodanese domain occupies 376 to 482 (LIKEFVIIDC…FFMKCQSYCE (107 aa)). Cysteine 431 is a catalytic residue. Threonine 507 is modified (phosphothreonine; by CHEK1). Residues serine 513 and serine 519 each carry the phosphoserine; by PLK3 modification.

It belongs to the MPI phosphatase family. Interacts with CCNB1/cyclin B1. Interacts with YWHAE/14-3-3 epsilon when phosphorylated. Interacts with CUL1 specifically when CUL1 is neddylated and active. Interacts with BTRC/BTRCP1 and FBXW11/BTRCP2. Interactions with CUL1, BTRC and FBXW11 are enhanced upon DNA damage. Interacts with CHEK2; mediates CDC25A phosphorylation and degradation in response to infrared-induced DNA damages. Interacts with HSP90AB1; prevents heat shock-mediated CDC25A degradation and contributes to cell cycle progression. Post-translationally, phosphorylated by CHEK1 on Ser-76, Ser-124, Ser-178, Ser-279, Ser-293 and Thr-507 during checkpoint mediated cell cycle arrest. Also phosphorylated by CHEK2 on Ser-124, Ser-279, and Ser-293 during checkpoint mediated cell cycle arrest. Phosphorylation on Ser-178 and Thr-507 creates binding sites for YWHAE/14-3-3 epsilon which inhibits CDC25A. Phosphorylation on Ser-76, Ser-124, Ser-178, Ser-279 and Ser-293 may also promote ubiquitin-dependent proteolysis of CDC25A by the SCF complex. Phosphorylation of CDC25A at Ser-76 by CHEK1 primes it for subsequent phosphorylation at Ser-79, Ser-82 and Ser-88 by NEK11. Phosphorylation by NEK11 is required for BTRC-mediated polyubiquitination and degradation. Phosphorylation by PIM1 leads to an increase in phosphatase activity. Phosphorylated by PLK3 following DNA damage, leading to promote its ubiquitination and degradation. In terms of processing, ubiquitinated by the anaphase promoting complex/cyclosome (APC/C) ubiquitin ligase complex that contains FZR1/CDH1 during G1 phase leading to its degradation by the proteasome. Ubiquitinated by a SCF complex containing BTRC and FBXW11 during S phase leading to its degradation by the proteasome. Deubiquitination by USP17L2/DUB3 leads to its stabilization.

It carries out the reaction O-phospho-L-tyrosyl-[protein] + H2O = L-tyrosyl-[protein] + phosphate. Its activity is regulated as follows. Stimulated by B-type cyclins. Stimulated by PIM1-mediated phosphorylation. Tyrosine protein phosphatase which functions as a dosage-dependent inducer of mitotic progression. Directly dephosphorylates CDK1 and stimulates its kinase activity. Also dephosphorylates CDK2 in complex with cyclin-E, in vitro. This Homo sapiens (Human) protein is M-phase inducer phosphatase 1 (CDC25A).